Reading from the N-terminus, the 204-residue chain is Probable chorismate pyruvate-lyase (204 aa).

Positions 75, 113, and 160 each coordinate substrate.

This sequence belongs to the UbiC family.

It is found in the cytoplasm. It catalyses the reaction chorismate = 4-hydroxybenzoate + pyruvate. It participates in cofactor biosynthesis; ubiquinone biosynthesis. Its function is as follows. Removes the pyruvyl group from chorismate, with concomitant aromatization of the ring, to provide 4-hydroxybenzoate (4HB) for the ubiquinone pathway. This Alcanivorax borkumensis (strain ATCC 700651 / DSM 11573 / NCIMB 13689 / SK2) protein is Probable chorismate pyruvate-lyase.